The following is a 244-amino-acid chain: Ribonuclease PH (244 aa).

Residues arginine 86 and 124-126 contribute to the phosphate site; that span reads GTR.

The protein belongs to the RNase PH family. In terms of assembly, homohexameric ring arranged as a trimer of dimers.

The catalysed reaction is tRNA(n+1) + phosphate = tRNA(n) + a ribonucleoside 5'-diphosphate. Its function is as follows. Phosphorolytic 3'-5' exoribonuclease that plays an important role in tRNA 3'-end maturation. Removes nucleotide residues following the 3'-CCA terminus of tRNAs; can also add nucleotides to the ends of RNA molecules by using nucleoside diphosphates as substrates, but this may not be physiologically important. Probably plays a role in initiation of 16S rRNA degradation (leading to ribosome degradation) during starvation. The chain is Ribonuclease PH from Oceanobacillus iheyensis (strain DSM 14371 / CIP 107618 / JCM 11309 / KCTC 3954 / HTE831).